Reading from the N-terminus, the 456-residue chain is MKLRVVILAAGKGTRMRSELPKVLHKVANKPMVEHVIDTARSLKPDAINLIYGHGGDQLKQAIAGDDLTWVEQREQLGTGHAVQQVIPHLKSSEKVIILYGDVPLLTESTLIKLVTASANTSLGLLTMTLAEPTGYGRIVRNERRSVTGIVEQKDANAQQLAINEVNTGIMIADSDKLKSWLEQLSNDNAQKEYYLTDIVAMAAREGINIATAQPDNAQEVEGANNRQQLASLERALQQRQAEELMTQGVTLIDPARFDCRGKLSAGSDVTIDINAVFEGNVVLGDRVVIEPNCVIRNSVIGDDTVIRANSHIEDAKVAKGCKVGPFARLRPGAELADEAQVGNFVEMKKSRLGKGSKASHLTYLGDTQVGEYANIGAGTITCNYDGVNKALTEIGDGAFIGSNSSLVAPVAIGKNATVGAGSVITRAVADEELAVARGKQRNISGWQRPQSKKGT.

Residues 1 to 227 are pyrophosphorylase; it reads MKLRVVILAA…AQEVEGANNR (227 aa). Residues 8–11, lysine 22, glutamine 73, 78–79, 100–102, glycine 137, glutamate 152, asparagine 167, and asparagine 225 each bind UDP-N-acetyl-alpha-D-glucosamine; these read LAAG, GT, and YGD. Aspartate 102 lines the Mg(2+) pocket. Residue asparagine 225 coordinates Mg(2+). A linker region spans residues 228–248; sequence QQLASLERALQQRQAEELMTQ. The interval 249–456 is N-acetyltransferase; it reads GVTLIDPARF…WQRPQSKKGT (208 aa). Arginine 331 and lysine 349 together coordinate UDP-N-acetyl-alpha-D-glucosamine. The active-site Proton acceptor is the histidine 361. Tyrosine 364 and asparagine 375 together coordinate UDP-N-acetyl-alpha-D-glucosamine. Acetyl-CoA is bound by residues alanine 378, 384-385, serine 403, alanine 421, and arginine 438; that span reads NY.

This sequence in the N-terminal section; belongs to the N-acetylglucosamine-1-phosphate uridyltransferase family. It in the C-terminal section; belongs to the transferase hexapeptide repeat family. As to quaternary structure, homotrimer. Mg(2+) is required as a cofactor.

It is found in the cytoplasm. The catalysed reaction is alpha-D-glucosamine 1-phosphate + acetyl-CoA = N-acetyl-alpha-D-glucosamine 1-phosphate + CoA + H(+). The enzyme catalyses N-acetyl-alpha-D-glucosamine 1-phosphate + UTP + H(+) = UDP-N-acetyl-alpha-D-glucosamine + diphosphate. It participates in nucleotide-sugar biosynthesis; UDP-N-acetyl-alpha-D-glucosamine biosynthesis; N-acetyl-alpha-D-glucosamine 1-phosphate from alpha-D-glucosamine 6-phosphate (route II): step 2/2. Its pathway is nucleotide-sugar biosynthesis; UDP-N-acetyl-alpha-D-glucosamine biosynthesis; UDP-N-acetyl-alpha-D-glucosamine from N-acetyl-alpha-D-glucosamine 1-phosphate: step 1/1. It functions in the pathway bacterial outer membrane biogenesis; LPS lipid A biosynthesis. Functionally, catalyzes the last two sequential reactions in the de novo biosynthetic pathway for UDP-N-acetylglucosamine (UDP-GlcNAc). The C-terminal domain catalyzes the transfer of acetyl group from acetyl coenzyme A to glucosamine-1-phosphate (GlcN-1-P) to produce N-acetylglucosamine-1-phosphate (GlcNAc-1-P), which is converted into UDP-GlcNAc by the transfer of uridine 5-monophosphate (from uridine 5-triphosphate), a reaction catalyzed by the N-terminal domain. This is Bifunctional protein GlmU from Idiomarina loihiensis (strain ATCC BAA-735 / DSM 15497 / L2-TR).